The following is a 926-amino-acid chain: Alanine--tRNA ligase (926 aa).

Residues H577, H581, C680, and H684 each contribute to the Zn(2+) site.

Belongs to the class-II aminoacyl-tRNA synthetase family. Zn(2+) is required as a cofactor.

It localises to the cytoplasm. The catalysed reaction is tRNA(Ala) + L-alanine + ATP = L-alanyl-tRNA(Ala) + AMP + diphosphate. Catalyzes the attachment of alanine to tRNA(Ala) in a two-step reaction: alanine is first activated by ATP to form Ala-AMP and then transferred to the acceptor end of tRNA(Ala). Also edits incorrectly charged Ser-tRNA(Ala) and Gly-tRNA(Ala) via its editing domain. The sequence is that of Alanine--tRNA ligase from Methylacidiphilum infernorum (isolate V4) (Methylokorus infernorum (strain V4)).